Consider the following 532-residue polypeptide: MVGSEVLEECGEKISKKESKKRAAKLEKLLRKQEREEATSSSLSLEEEDESCSSNYGDVTTNELQSAVEGKELTDVSNLVEEIVGSEVSIRGRLHKNRLVGTKLFVILRESGFTVQCVVEETRVGANMIKFVKQLSRESVVELIGVVSHPKKPLTGTTQQVEIHVRKMYCLSRSLPNLPLVVEDAARSESDIEKSGKDGKQAARVLQDTRLNNRVLDIRTPANQAIFRIQCQVQIAFREYLQSKGFLEIHTPKLIAGSSEGGSAVFRLDYKGQPACLAQSPQLHKQMAICGDMRRVFEVGPVFRAEDSFTHRHLCEFVGLDVEMEIRMHYSEIMDLVGELFPFIFTKIEERCPKELESVRKQYPFQSLKFLPQTLRLTFAEGIQMLKEAGEEVDPLGDLNTESERKLGQLVLEKYKTEFYMLHRYPSAVRPFYTMPYENDSNYSNSFDVFIRGEEIMSGAQRIHDPELLEKRARECGIDVKTISTYIDAFRYGAPPHGGFGVGLERVVMLLCALNNIRKTSLFPRDSQRLTP.

The stretch at leucine 7–serine 41 forms a coiled coil. The tract at residues arginine 31–aspartate 58 is disordered. The OB DNA-binding region spans valine 88 to tyrosine 169. Glutamate 260 provides a ligand contact to L-aspartate. An aspartate region spans residues glutamine 282–lysine 285. Arginine 304 contributes to the L-aspartate binding site. ATP is bound by residues arginine 304–glutamate 306, arginine 312–leucine 314, and glutamate 455. Residues glutamate 455 and serine 458 each coordinate Mg(2+). 2 residues coordinate L-aspartate: serine 458 and arginine 462. Residue glycine 503–arginine 506 coordinates ATP.

Belongs to the class-II aminoacyl-tRNA synthetase family. Type 2 subfamily.

It localises to the cytoplasm. Its subcellular location is the cytosol. The catalysed reaction is tRNA(Asp) + L-aspartate + ATP = L-aspartyl-tRNA(Asp) + AMP + diphosphate. Its function is as follows. Catalyzes the specific attachment of an amino acid to its cognate tRNA in a 2 step reaction: the amino acid (AA) is first activated by ATP to form AA-AMP and then transferred to the acceptor end of the tRNA. This Arabidopsis thaliana (Mouse-ear cress) protein is Aspartate--tRNA ligase 1, cytoplasmic.